We begin with the raw amino-acid sequence, 476 residues long: RNA-splicing ligase RtcB homolog (476 aa).

5 residues coordinate Mn(2+): Asp90, Cys93, His198, His230, and His324. 197-201 provides a ligand contact to GMP; the sequence is NHYAE. Residues 324 to 325, 373 to 376, Ser380, 399 to 402, and Lys475 each bind GMP; these read HN, GGTM, and HGAG. His399 (GMP-histidine intermediate) is an active-site residue.

Belongs to the RtcB family. As to quaternary structure, catalytic component of the tRNA-splicing ligase complex. Requires Mn(2+) as cofactor.

It carries out the reaction a 3'-end 3'-phospho-ribonucleotide-RNA + a 5'-end dephospho-ribonucleoside-RNA + GTP = a ribonucleotidyl-ribonucleotide-RNA + GMP + diphosphate. It catalyses the reaction a 3'-end 2',3'-cyclophospho-ribonucleotide-RNA + a 5'-end dephospho-ribonucleoside-RNA + GTP + H2O = a ribonucleotidyl-ribonucleotide-RNA + GMP + diphosphate + H(+). In terms of biological role, catalytic subunit of the tRNA-splicing ligase complex that acts by directly joining spliced tRNA halves to mature-sized tRNAs by incorporating the precursor-derived splice junction phosphate into the mature tRNA as a canonical 3',5'-phosphodiester. May act as an RNA ligase with broad substrate specificity, and may function toward other RNAs. The polypeptide is RNA-splicing ligase RtcB homolog (Chlamydomonas reinhardtii (Chlamydomonas smithii)).